The primary structure comprises 357 residues: Membrane-bound lytic murein transglycosylase C (357 aa).

An N-terminal signal peptide occupies residues M1–S16. The N-palmitoyl cysteine moiety is linked to residue C17. C17 carries S-diacylglycerol cysteine lipidation.

The protein belongs to the transglycosylase Slt family.

The protein localises to the cell outer membrane. It carries out the reaction Exolytic cleavage of the (1-&gt;4)-beta-glycosidic linkage between N-acetylmuramic acid (MurNAc) and N-acetylglucosamine (GlcNAc) residues in peptidoglycan, from either the reducing or the non-reducing ends of the peptidoglycan chains, with concomitant formation of a 1,6-anhydrobond in the MurNAc residue.. In terms of biological role, murein-degrading enzyme. May play a role in recycling of muropeptides during cell elongation and/or cell division. This is Membrane-bound lytic murein transglycosylase C from Sodalis glossinidius (strain morsitans).